Reading from the N-terminus, the 128-residue chain is Disintegrin gabonin-1 (128 aa).

The signal sequence occupies residues M1–S20. A propeptide spanning residues I21 to M47 is cleaved from the precursor. The Disintegrin domain occupies M47–E112. Disulfide bonds link C53–C76, C67–C73, C72–C97, and C85–C104. Residues R89–D91 carry the Cell attachment site motif. The disordered stretch occupies residues P108–M128.

This sequence belongs to the disintegrin family. Dimeric disintegrin subfamily. In terms of assembly, heterodimer with bitisgabonin (bitisgabonin-1 is the name of the heterodimer); disulfide-linked. Expressed by the venom gland.

Its subcellular location is the secreted. Functionally, the heterodimer bitisgabonin-1 is a potent inhibitor of the adhesion of the RGD-dependent integrin alpha-5/beta-1 (ITGA5/ITGB1) to immobilized fibronectin. This Bitis gabonica (Gaboon adder) protein is Disintegrin gabonin-1.